A 196-amino-acid chain; its full sequence is NADH-quinone oxidoreductase subunit B (196 aa).

Residues C75, C76, C140, and C170 each contribute to the [4Fe-4S] cluster site.

It belongs to the complex I 20 kDa subunit family. NDH-1 is composed of 14 different subunits. Subunits NuoB, C, D, E, F, and G constitute the peripheral sector of the complex. The cofactor is [4Fe-4S] cluster.

Its subcellular location is the cell inner membrane. It catalyses the reaction a quinone + NADH + 5 H(+)(in) = a quinol + NAD(+) + 4 H(+)(out). Its function is as follows. NDH-1 shuttles electrons from NADH, via FMN and iron-sulfur (Fe-S) centers, to quinones in the respiratory chain. Couples the redox reaction to proton translocation (for every two electrons transferred, four hydrogen ions are translocated across the cytoplasmic membrane), and thus conserves the redox energy in a proton gradient. The protein is NADH-quinone oxidoreductase subunit B of Caulobacter sp. (strain K31).